The following is a 694-amino-acid chain: Elongation factor G 2 (694 aa).

Positions 8–282 (TAIRNIGIMA…AVVSYLPSPL (275 aa)) constitute a tr-type G domain. GTP is bound by residues 17–24 (AHIDAGKT), 81–85 (DTPGH), and 135–138 (NKMD).

Belongs to the TRAFAC class translation factor GTPase superfamily. Classic translation factor GTPase family. EF-G/EF-2 subfamily.

Its subcellular location is the cytoplasm. In terms of biological role, catalyzes the GTP-dependent ribosomal translocation step during translation elongation. During this step, the ribosome changes from the pre-translocational (PRE) to the post-translocational (POST) state as the newly formed A-site-bound peptidyl-tRNA and P-site-bound deacylated tRNA move to the P and E sites, respectively. Catalyzes the coordinated movement of the two tRNA molecules, the mRNA and conformational changes in the ribosome. The polypeptide is Elongation factor G 2 (Syntrophomonas wolfei subsp. wolfei (strain DSM 2245B / Goettingen)).